The primary structure comprises 466 residues: Cocosin 1 (466 aa).

Positions 1–22 are cleaved as a signal peptide; sequence MGSSSLLSFSLCLLLLCHLSQA. Disulfide bonds link cysteine 45/cysteine 78 and cysteine 121/cysteine 288. Cupin type-1 domains follow at residues 50 to 242 and 294 to 443; these read LNAL…ELAR and QNIG…DEAR.

The protein belongs to the 11S seed storage protein (globulins) family. As to quaternary structure, hexamer; each subunit is composed of an acidic and a basic chain derived from a single precursor and linked by a disulfide bond. Endosperm of the seeds.

Functionally, seed storage protein. This Cocos nucifera (Coconut palm) protein is Cocosin 1.